A 444-amino-acid polypeptide reads, in one-letter code: Phosphomethylpyrimidine synthase (444 aa).

Residues Asn-80, Met-109, Tyr-138, His-174, 194 to 196 (SRG), 235 to 238 (DSLR), and Glu-274 each bind substrate. His-278 is a binding site for Zn(2+). A substrate-binding site is contributed by Tyr-301. His-342 is a binding site for Zn(2+). Positions 422, 425, and 430 each coordinate [4Fe-4S] cluster.

Belongs to the ThiC family. As to quaternary structure, homodimer. [4Fe-4S] cluster serves as cofactor.

The catalysed reaction is 5-amino-1-(5-phospho-beta-D-ribosyl)imidazole + S-adenosyl-L-methionine = 4-amino-2-methyl-5-(phosphooxymethyl)pyrimidine + CO + 5'-deoxyadenosine + formate + L-methionine + 3 H(+). The protein operates within cofactor biosynthesis; thiamine diphosphate biosynthesis. Catalyzes the synthesis of the hydroxymethylpyrimidine phosphate (HMP-P) moiety of thiamine from aminoimidazole ribotide (AIR) in a radical S-adenosyl-L-methionine (SAM)-dependent reaction. The polypeptide is Phosphomethylpyrimidine synthase (Nitratiruptor sp. (strain SB155-2)).